A 448-amino-acid polypeptide reads, in one-letter code: Signal recognition particle protein (448 aa).

GTP contacts are provided by residues Gly-101–Thr-108, Asp-182–Arg-186, and Ser-240–Asp-243.

This sequence belongs to the GTP-binding SRP family. SRP54 subfamily. As to quaternary structure, part of the signal recognition particle protein translocation system, which is composed of SRP and FtsY. SRP is a ribonucleoprotein composed of Ffh and a 4.5S RNA molecule.

The protein resides in the cytoplasm. It carries out the reaction GTP + H2O = GDP + phosphate + H(+). Functionally, involved in targeting and insertion of nascent membrane proteins into the cytoplasmic membrane. Binds to the hydrophobic signal sequence of the ribosome-nascent chain (RNC) as it emerges from the ribosomes. The SRP-RNC complex is then targeted to the cytoplasmic membrane where it interacts with the SRP receptor FtsY. Interaction with FtsY leads to the transfer of the RNC complex to the Sec translocase for insertion into the membrane, the hydrolysis of GTP by both Ffh and FtsY, and the dissociation of the SRP-FtsY complex into the individual components. The sequence is that of Signal recognition particle protein from Helicobacter pylori (strain J99 / ATCC 700824) (Campylobacter pylori J99).